A 554-amino-acid chain; its full sequence is uncharacterized protein (554 aa).

Ca(2+) is bound by residues D327 and N328.

Belongs to the sulfatase family. Requires Ca(2+) as cofactor.

The protein localises to the cytoplasm. It localises to the nucleus. This is an uncharacterized protein from Schizosaccharomyces pombe (strain 972 / ATCC 24843) (Fission yeast).